Reading from the N-terminus, the 654-residue chain is Acetyl-coenzyme A synthetase (654 aa).

Residues 190–193 (RGGK) and Thr313 each bind CoA. Residues 389-391 (GEP), 413-418 (DTWWQT), Asp504, and Arg519 contribute to the ATP site. Ser527 contributes to the CoA binding site. ATP is bound at residue Arg530. Mg(2+) contacts are provided by Val541 and Val546. Lys613 carries the N6-acetyllysine modification.

The protein belongs to the ATP-dependent AMP-binding enzyme family. Mg(2+) is required as a cofactor. Post-translationally, acetylated. Deacetylation by the SIR2-homolog deacetylase activates the enzyme.

It carries out the reaction acetate + ATP + CoA = acetyl-CoA + AMP + diphosphate. Its function is as follows. Catalyzes the conversion of acetate into acetyl-CoA (AcCoA), an essential intermediate at the junction of anabolic and catabolic pathways. AcsA undergoes a two-step reaction. In the first half reaction, AcsA combines acetate with ATP to form acetyl-adenylate (AcAMP) intermediate. In the second half reaction, it can then transfer the acetyl group from AcAMP to the sulfhydryl group of CoA, forming the product AcCoA. This is Acetyl-coenzyme A synthetase from Leptospira borgpetersenii serovar Hardjo-bovis (strain L550).